A 225-amino-acid polypeptide reads, in one-letter code: UPF0758 protein BcerKBAB4_4299 (225 aa).

The MPN domain occupies 103–225 (SIRSPEDCAS…FVSLKEKGHI (123 aa)). Residues H174, H176, and D187 each coordinate Zn(2+). Residues 174–187 (HNHPSGDPAPSRED) carry the JAMM motif motif.

The protein belongs to the UPF0758 family.

In Bacillus mycoides (strain KBAB4) (Bacillus weihenstephanensis), this protein is UPF0758 protein BcerKBAB4_4299.